The following is a 272-amino-acid chain: Phosphatidylglycerol--prolipoprotein diacylglyceryl transferase (272 aa).

Helical transmembrane passes span 16-36 (VGLH…LSSF), 62-82 (FALG…VLFY), 97-117 (IWKG…WAAV), and 129-149 (LSVT…ALLI). Arg150 lines the a 1,2-diacyl-sn-glycero-3-phospho-(1'-sn-glycerol) pocket. Helical transmembrane passes span 206–226 (GVIR…VAVI) and 246–266 (ILTI…GIIW).

Belongs to the Lgt family.

It localises to the cell inner membrane. It carries out the reaction L-cysteinyl-[prolipoprotein] + a 1,2-diacyl-sn-glycero-3-phospho-(1'-sn-glycerol) = an S-1,2-diacyl-sn-glyceryl-L-cysteinyl-[prolipoprotein] + sn-glycerol 1-phosphate + H(+). The protein operates within protein modification; lipoprotein biosynthesis (diacylglyceryl transfer). Functionally, catalyzes the transfer of the diacylglyceryl group from phosphatidylglycerol to the sulfhydryl group of the N-terminal cysteine of a prolipoprotein, the first step in the formation of mature lipoproteins. This chain is Phosphatidylglycerol--prolipoprotein diacylglyceryl transferase, found in Chlamydia trachomatis serovar D (strain ATCC VR-885 / DSM 19411 / UW-3/Cx).